We begin with the raw amino-acid sequence, 315 residues long: uncharacterized protein (315 aa).

3 helical membrane passes run isoleucine 18–glycine 38, isoleucine 202–isoleucine 222, and leucine 244–leucine 264. Residues valine 288–alanine 315 are disordered.

The protein resides in the membrane. This is an uncharacterized protein from Saccharomyces cerevisiae (strain ATCC 204508 / S288c) (Baker's yeast).